The primary structure comprises 331 residues: Vitamin B12 import system permease protein BtuC (331 aa).

A run of 9 helical transmembrane segments spans residues 20–42, 62–84, 91–113, 118–140, 147–169, 189–208, 240–262, 277–299, and 306–325; these read IMSV…FLSP, LVAA…VLLG, GVLG…LPVL, IFML…IARA, RLLL…AFYF, ASWY…VWLC, LAIS…VGLV, YLLP…GARL, and LPLG…WMLV.

The protein belongs to the binding-protein-dependent transport system permease family. FecCD subfamily. In terms of assembly, the complex is composed of two ATP-binding proteins (BtuD), two transmembrane proteins (BtuC) and a solute-binding protein (BtuF).

It is found in the cell inner membrane. Functionally, part of the ABC transporter complex BtuCDF involved in vitamin B12 import. Involved in the translocation of the substrate across the membrane. The chain is Vitamin B12 import system permease protein BtuC from Vibrio parahaemolyticus serotype O3:K6 (strain RIMD 2210633).